A 365-amino-acid chain; its full sequence is Endophilin-B1 (365 aa).

Methionine 1 carries the N-acetylmethionine modification. The tract at residues 1–30 (MNIMDFNVKKLAADAGTFLSRAVQFTEEKL) is membrane-binding amphipathic helix. The required for membrane binding stretch occupies residues 1–37 (MNIMDFNVKKLAADAGTFLSRAVQFTEEKLGQAEKTE). Residues 27-261 (EEKLGQAEKT…LGSFPSNYVS (235 aa)) form the BAR domain. Position 145 is a phosphothreonine; by CDK5 (threonine 145). Residues 156–185 (KTIAKERKLLQNKRLDLDAAKTRLKKAKAA) adopt a coiled-coil conformation. Residues 305–365 (SSTRKARVLY…VPITYLELLN (61 aa)) form the SH3 domain.

It belongs to the endophilin family. In terms of assembly, homodimer, and heterodimer with SH3GLB2. Binds BAX; induction of apoptosis augments BAX binding. Binds DNM1, HTT, AMPH, BIN1 and ARFGAP1. Interacts with UVRAG; UVRAG bridges the interaction to BECN1 indicative for an association with the PI3K complex II (PI3KC3-C2). Post-translationally, phosphorylated at Thr-145 by CDK5; this phosphorylation is required for autophagy induction in starved neurons and facilitates homodimerization. In terms of tissue distribution, expressed in brain, heart, lung and spleen. Low level in liver and testis.

It is found in the cytoplasm. The protein localises to the golgi apparatus membrane. It localises to the mitochondrion outer membrane. The protein resides in the cytoplasmic vesicle. Its subcellular location is the autophagosome membrane. It is found in the midbody. Functionally, may be required for normal outer mitochondrial membrane dynamics. Required for coatomer-mediated retrograde transport in certain cells. May recruit other proteins to membranes with high curvature. May promote membrane fusion. Involved in activation of caspase-dependent apoptosis by promoting BAX/BAK1 activation. Involved in caspase-independent apoptosis during nutrition starvation and involved in the regulation of autophagy. Activates lipid kinase activity of PIK3C3 during autophagy probably by associating with the PI3K complex II (PI3KC3-C2). Associated with PI3KC3-C2 during autophagy may regulate the trafficking of ATG9A from the Golgi complex to the peripheral cytoplasm for the formation of autophagosomes by inducing Golgi membrane tubulation and fragmentation. Involved in regulation of degradative endocytic trafficking and cytokinesis, probably in the context of PI3KC3-C2. The chain is Endophilin-B1 from Rattus norvegicus (Rat).